The following is a 329-amino-acid chain: Arylacetonitrilase (329 aa).

In terms of domain architecture, CN hydrolase spans 6 to 279 (VRVAVTQAEP…EGIVYANLDM (274 aa)). Residue E46 is the Proton acceptor of the active site. K126 is an active-site residue. Catalysis depends on C161, which acts as the Nucleophile.

This sequence belongs to the carbon-nitrogen hydrolase superfamily. Nitrilase family.

The catalysed reaction is a nitrile + 2 H2O = a carboxylate + NH4(+). It carries out the reaction 4-chlorophenylacetonitrile + 2 H2O = 4-chlorophenylacetate + NH4(+). Nitrilase that hydrolyzes preferentially phenylacetonitrile and heteroaromatic nitriles, but has significantly lower activity for (R,S)-mandelonitrile. Also acts on dinitriles like phenylenediacetonitriles (PDAs) 1,2-PDA, 1,3-PDA, and 1,4-PDA, and cyanophenyl acetonitriles (CPAs) 2-CPA and 4-CPA. The sequence is that of Arylacetonitrilase from Hypocrea virens (strain Gv29-8 / FGSC 10586) (Gliocladium virens).